Reading from the N-terminus, the 471-residue chain is Tryptophanase (471 aa).

N6-acetyllysine is present on residues K5, K115, and K156. K270 carries the post-translational modification N6-(pyridoxal phosphate)lysine. At K450 the chain carries N6-acetyllysine.

Belongs to the beta-eliminating lyase family. As to quaternary structure, homotetramer. Requires pyridoxal 5'-phosphate as cofactor.

It carries out the reaction L-tryptophan + H2O = indole + pyruvate + NH4(+). The protein operates within amino-acid degradation; L-tryptophan degradation via pyruvate pathway; indole and pyruvate from L-tryptophan: step 1/1. The protein is Tryptophanase of Escherichia coli (strain SMS-3-5 / SECEC).